We begin with the raw amino-acid sequence, 348 residues long: tRNA N6-adenosine threonylcarbamoyltransferase (348 aa).

The Fe cation site is built by His-109 and His-113. Residues 136–140 (TVSGG), Asp-169, Gly-182, Asp-186, and Asn-284 each bind substrate. Asp-312 is a Fe cation binding site.

Belongs to the KAE1 / TsaD family. The cofactor is Fe(2+).

It localises to the cytoplasm. It carries out the reaction L-threonylcarbamoyladenylate + adenosine(37) in tRNA = N(6)-L-threonylcarbamoyladenosine(37) in tRNA + AMP + H(+). Required for the formation of a threonylcarbamoyl group on adenosine at position 37 (t(6)A37) in tRNAs that read codons beginning with adenine. Is involved in the transfer of the threonylcarbamoyl moiety of threonylcarbamoyl-AMP (TC-AMP) to the N6 group of A37, together with TsaE and TsaB. TsaD likely plays a direct catalytic role in this reaction. This is tRNA N6-adenosine threonylcarbamoyltransferase from Chlorobium luteolum (strain DSM 273 / BCRC 81028 / 2530) (Pelodictyon luteolum).